Reading from the N-terminus, the 182-residue chain is Probable RNA 2'-phosphotransferase (182 aa).

It belongs to the KptA/TPT1 family.

In terms of biological role, removes the 2'-phosphate from RNA via an intermediate in which the phosphate is ADP-ribosylated by NAD followed by a presumed transesterification to release the RNA and generate ADP-ribose 1''-2''-cyclic phosphate (APPR&gt;P). May function as an ADP-ribosylase. This chain is Probable RNA 2'-phosphotransferase, found in Herpetosiphon aurantiacus (strain ATCC 23779 / DSM 785 / 114-95).